Here is a 135-residue protein sequence, read N- to C-terminus: D-ribose pyranase (135 aa).

The active-site Proton donor is the H20. Substrate-binding positions include D28, H102, and 124–126 (YSN).

The protein belongs to the RbsD / FucU family. RbsD subfamily. Homodecamer.

The protein resides in the cytoplasm. The catalysed reaction is beta-D-ribopyranose = beta-D-ribofuranose. Its pathway is carbohydrate metabolism; D-ribose degradation; D-ribose 5-phosphate from beta-D-ribopyranose: step 1/2. In terms of biological role, catalyzes the interconversion of beta-pyran and beta-furan forms of D-ribose. This chain is D-ribose pyranase, found in Thermotoga petrophila (strain ATCC BAA-488 / DSM 13995 / JCM 10881 / RKU-1).